Here is a 370-residue protein sequence, read N- to C-terminus: Ribosomal RNA small subunit methyltransferase H (370 aa).

S-adenosyl-L-methionine contacts are provided by residues 85–87 (GGH), Asp104, Tyr131, Asp152, and Gln159. 2 stretches are compositionally biased toward basic and acidic residues: residues 332-345 (GAERATPEEIERNP) and 353-370 (RALEKVAGRPTTARRDAR). Residues 332-370 (GAERATPEEIERNPRSAPVRLRALEKVAGRPTTARRDAR) are disordered.

This sequence belongs to the methyltransferase superfamily. RsmH family.

The protein resides in the cytoplasm. The catalysed reaction is cytidine(1402) in 16S rRNA + S-adenosyl-L-methionine = N(4)-methylcytidine(1402) in 16S rRNA + S-adenosyl-L-homocysteine + H(+). In terms of biological role, specifically methylates the N4 position of cytidine in position 1402 (C1402) of 16S rRNA. This Mycobacterium sp. (strain KMS) protein is Ribosomal RNA small subunit methyltransferase H.